The primary structure comprises 203 residues: dITP/XTP pyrophosphatase (203 aa).

9 to 14 (SSNAGK) contacts substrate. Glutamate 42 and aspartate 72 together coordinate Mg(2+). Aspartate 72 functions as the Proton acceptor in the catalytic mechanism. Residues serine 73, 161–164 (FGYD), lysine 184, and 189–190 (HR) contribute to the substrate site.

This sequence belongs to the HAM1 NTPase family. As to quaternary structure, homodimer. Requires Mg(2+) as cofactor.

It catalyses the reaction XTP + H2O = XMP + diphosphate + H(+). It carries out the reaction dITP + H2O = dIMP + diphosphate + H(+). The catalysed reaction is ITP + H2O = IMP + diphosphate + H(+). Functionally, pyrophosphatase that catalyzes the hydrolysis of nucleoside triphosphates to their monophosphate derivatives, with a high preference for the non-canonical purine nucleotides XTP (xanthosine triphosphate), dITP (deoxyinosine triphosphate) and ITP. Seems to function as a house-cleaning enzyme that removes non-canonical purine nucleotides from the nucleotide pool, thus preventing their incorporation into DNA/RNA and avoiding chromosomal lesions. The sequence is that of dITP/XTP pyrophosphatase from Acidobacterium capsulatum (strain ATCC 51196 / DSM 11244 / BCRC 80197 / JCM 7670 / NBRC 15755 / NCIMB 13165 / 161).